Reading from the N-terminus, the 458-residue chain is Phosphoglucosamine mutase (458 aa).

Ser-100 (phosphoserine intermediate) is an active-site residue. Mg(2+) is bound by residues Ser-100, Asp-239, Asp-241, and Asp-243. Ser-100 carries the post-translational modification Phosphoserine.

This sequence belongs to the phosphohexose mutase family. Mg(2+) serves as cofactor. In terms of processing, activated by phosphorylation.

The catalysed reaction is alpha-D-glucosamine 1-phosphate = D-glucosamine 6-phosphate. Catalyzes the conversion of glucosamine-6-phosphate to glucosamine-1-phosphate. The protein is Phosphoglucosamine mutase of Dictyoglomus thermophilum (strain ATCC 35947 / DSM 3960 / H-6-12).